A 503-amino-acid polypeptide reads, in one-letter code: Probable cytosol aminopeptidase (503 aa).

Lys270 and Asp275 together coordinate Mn(2+). The active site involves Lys282. 3 residues coordinate Mn(2+): Asp293, Asp352, and Glu354. Arg356 is an active-site residue.

The protein belongs to the peptidase M17 family. The cofactor is Mn(2+).

It localises to the cytoplasm. It catalyses the reaction Release of an N-terminal amino acid, Xaa-|-Yaa-, in which Xaa is preferably Leu, but may be other amino acids including Pro although not Arg or Lys, and Yaa may be Pro. Amino acid amides and methyl esters are also readily hydrolyzed, but rates on arylamides are exceedingly low.. The enzyme catalyses Release of an N-terminal amino acid, preferentially leucine, but not glutamic or aspartic acids.. Its function is as follows. Presumably involved in the processing and regular turnover of intracellular proteins. Catalyzes the removal of unsubstituted N-terminal amino acids from various peptides. This is Probable cytosol aminopeptidase from Salmonella agona (strain SL483).